A 249-amino-acid chain; its full sequence is UPF0758 protein BMEI0718 (249 aa).

Residues 1-34 are disordered; it reads MAKKKDTPGDGEFPGFSDTLQRTPKLEKPHYAGH. The segment covering 24 to 34 has biased composition (basic and acidic residues); it reads PKLEKPHYAGH. Residues 127–249 enclose the MPN domain; the sequence is VLGSWDKVIN…HASLRSLRLI (123 aa). Zn(2+)-binding residues include histidine 198, histidine 200, and aspartate 211. A JAMM motif motif is present at residues 198-211; that stretch reads HNHPSGDPTPSRAD.

Belongs to the UPF0758 family.

The polypeptide is UPF0758 protein BMEI0718 (Brucella melitensis biotype 1 (strain ATCC 23456 / CCUG 17765 / NCTC 10094 / 16M)).